The sequence spans 126 residues: Small ribosomal subunit protein uS11 (126 aa).

This sequence belongs to the universal ribosomal protein uS11 family. As to quaternary structure, part of the 30S ribosomal subunit. Interacts with proteins S7 and S18. Binds to IF-3.

Located on the platform of the 30S subunit, it bridges several disparate RNA helices of the 16S rRNA. Forms part of the Shine-Dalgarno cleft in the 70S ribosome. This Orientia tsutsugamushi (strain Boryong) (Rickettsia tsutsugamushi) protein is Small ribosomal subunit protein uS11.